The sequence spans 355 residues: MSDSKLADSLNCLSVSTPSTTANPGRQQLLRLAVSNQRQVNNVSLANGKENKRTSNSKFNSSLRKIEEPIAGVPSSAGPQWREFHIGMFEIGKPLGKGKFGRVYLAKEKKTGFIVALKTLHKSELVQSKIEKQVRREIEIQSNLRHKNILRLYGHFHDEKRIYLILEFAGRGELYQHLRRAKRFSEEVASKYIFQMANALSYLHKKHVIHRDIKPENILLGIDGEIKLSDFGWSVHAPSNRRTTLCGTLDYLPPEMVEGKEHTEKVDLWSLGVLTYEFLVGAPPFEDMSGHSATYKRIAKVDLKIPSFVPPDARDLISRLLQHNPEKRMSLEQVMRHPWIVKYKDSWTRKSSESS.

The region spanning 89 to 340 (FEIGKPLGKG…LEQVMRHPWI (252 aa)) is the Protein kinase domain. Residues 95–103 (LGKGKFGRV) and lysine 118 each bind ATP. The Proton acceptor role is filled by aspartate 212.

It belongs to the protein kinase superfamily. Ser/Thr protein kinase family. Aurora subfamily. Component of the CPC complex at least composed of ark1, bir1 and pic1. Interacts with the mitotic checkpoint complex (MCC) subunit mad3.

The protein resides in the nucleus. It is found in the cytoplasm. It localises to the cytoskeleton. Its subcellular location is the spindle. It catalyses the reaction L-seryl-[protein] + ATP = O-phospho-L-seryl-[protein] + ADP + H(+). The enzyme catalyses L-threonyl-[protein] + ATP = O-phospho-L-threonyl-[protein] + ADP + H(+). Its function is as follows. Component of the chromosomal passenger complex (CPC), a complex that acts as a key regulator of chromosome segregation and cytokinesis. Has a role in error-correction of aberrent kinetochore-microtubule attachments to ensure that sister kinetochores become bioriented and connect to opposite poles by promoting spindle assembly checkpoint signaling. Ark1 is also required for phosphorylation of histone H3 that accompanies chromosome condensation and condensin recruitment to mitotic chromatin. The protein is Aurora kinase (ark1) of Schizosaccharomyces pombe (strain 972 / ATCC 24843) (Fission yeast).